Consider the following 316-residue polypeptide: 4-hydroxy-3-methylbut-2-enyl diphosphate reductase (316 aa).

Residue Cys-12 coordinates [4Fe-4S] cluster. Positions 41 and 74 each coordinate (2E)-4-hydroxy-3-methylbut-2-enyl diphosphate. Dimethylallyl diphosphate-binding residues include His-41 and His-74. Residues His-41 and His-74 each contribute to the isopentenyl diphosphate site. Cys-96 serves as a coordination point for [4Fe-4S] cluster. His-124 contributes to the (2E)-4-hydroxy-3-methylbut-2-enyl diphosphate binding site. His-124 is a binding site for dimethylallyl diphosphate. His-124 contributes to the isopentenyl diphosphate binding site. Residue Glu-126 is the Proton donor of the active site. A (2E)-4-hydroxy-3-methylbut-2-enyl diphosphate-binding site is contributed by Thr-167. Cys-197 contributes to the [4Fe-4S] cluster binding site. Ser-225, Ser-226, Asn-227, and Ser-269 together coordinate (2E)-4-hydroxy-3-methylbut-2-enyl diphosphate. Dimethylallyl diphosphate contacts are provided by Ser-225, Ser-226, Asn-227, and Ser-269. Ser-225, Ser-226, Asn-227, and Ser-269 together coordinate isopentenyl diphosphate.

The protein belongs to the IspH family. As to quaternary structure, homodimer. It depends on [4Fe-4S] cluster as a cofactor.

The enzyme catalyses isopentenyl diphosphate + 2 oxidized [2Fe-2S]-[ferredoxin] + H2O = (2E)-4-hydroxy-3-methylbut-2-enyl diphosphate + 2 reduced [2Fe-2S]-[ferredoxin] + 2 H(+). It carries out the reaction dimethylallyl diphosphate + 2 oxidized [2Fe-2S]-[ferredoxin] + H2O = (2E)-4-hydroxy-3-methylbut-2-enyl diphosphate + 2 reduced [2Fe-2S]-[ferredoxin] + 2 H(+). The protein operates within isoprenoid biosynthesis; dimethylallyl diphosphate biosynthesis; dimethylallyl diphosphate from (2E)-4-hydroxy-3-methylbutenyl diphosphate: step 1/1. Its pathway is isoprenoid biosynthesis; isopentenyl diphosphate biosynthesis via DXP pathway; isopentenyl diphosphate from 1-deoxy-D-xylulose 5-phosphate: step 6/6. In terms of biological role, catalyzes the conversion of 1-hydroxy-2-methyl-2-(E)-butenyl 4-diphosphate (HMBPP) into a mixture of isopentenyl diphosphate (IPP) and dimethylallyl diphosphate (DMAPP). Acts in the terminal step of the DOXP/MEP pathway for isoprenoid precursor biosynthesis. The chain is 4-hydroxy-3-methylbut-2-enyl diphosphate reductase from Shigella flexneri serotype 5b (strain 8401).